The primary structure comprises 135 residues: Snaclec rhodocetin subunit gamma (135 aa).

3 cysteine pairs are disulfide-bonded: C4–C15, C32–C129, and C104–C121. One can recognise a C-type lectin domain in the interval 11 to 130 (YDQHCYQAFN…CQAKNPFVCK (120 aa)).

Belongs to the snaclec family. Heterotetramer of subunit alpha, beta, gamma and delta; only the gamma and the delta subunits are disulfide-linked. Alpha-beta heterodimer and gamma-delta heterodimer associate orthogonally, giving a cruciform conformation. This heterotetramer may covalently dimerizes thanks to the gamma subunit. As to expression, expressed by the venom gland.

The protein resides in the secreted. In terms of biological role, potent inhibitor of collagen-induced platelet aggregation. It acts by binding to the integrin alpha2A domain and blocks collagen binding to integrin alpha-2/beta-1 (ITGA2/ITGB1). The gamma/delta subunits mainly contribute to this activity. This is Snaclec rhodocetin subunit gamma from Calloselasma rhodostoma (Malayan pit viper).